The sequence spans 426 residues: Glutamyl-tRNA reductase (426 aa).

Residues 52–55, Ser-110, 115–117, and Gln-121 each bind substrate; these read TCNR and EYE. Cys-53 (nucleophile) is an active-site residue. 190–195 contributes to the NADP(+) binding site; that stretch reads GAGEMA.

It belongs to the glutamyl-tRNA reductase family. As to quaternary structure, homodimer.

It catalyses the reaction (S)-4-amino-5-oxopentanoate + tRNA(Glu) + NADP(+) = L-glutamyl-tRNA(Glu) + NADPH + H(+). The protein operates within porphyrin-containing compound metabolism; protoporphyrin-IX biosynthesis; 5-aminolevulinate from L-glutamyl-tRNA(Glu): step 1/2. Catalyzes the NADPH-dependent reduction of glutamyl-tRNA(Glu) to glutamate 1-semialdehyde (GSA). The chain is Glutamyl-tRNA reductase from Saccharolobus solfataricus (strain ATCC 35092 / DSM 1617 / JCM 11322 / P2) (Sulfolobus solfataricus).